Consider the following 118-residue polypeptide: V-type proton ATPase subunit F (118 aa).

This sequence belongs to the V-ATPase F subunit family. V-ATPase is a heteromultimeric enzyme composed of a peripheral catalytic V1 complex (components A to H) attached to an integral membrane V0 proton pore complex (components: a, c, c', c'', d, e, f and VOA1).

It localises to the vacuole membrane. Functionally, subunit of the V1 complex of vacuolar(H+)-ATPase (V-ATPase), a multisubunit enzyme composed of a peripheral complex (V1) that hydrolyzes ATP and a membrane integral complex (V0) that translocates protons. V-ATPase is responsible for acidifying and maintaining the pH of intracellular compartments. The sequence is that of V-type proton ATPase subunit F from Saccharomyces cerevisiae (strain ATCC 204508 / S288c) (Baker's yeast).